The sequence spans 89 residues: MALLDFFLSRKKTTANIAKERLQIIVAERRRGDSEPHYLPQLKRDILEVICKYVQIDPEMVTVQLEQKGDDISVLELNVTLPEAEETPK.

This sequence belongs to the MinE family.

In terms of biological role, prevents the cell division inhibition by proteins MinC and MinD at internal division sites while permitting inhibition at polar sites. This ensures cell division at the proper site by restricting the formation of a division septum at the midpoint of the long axis of the cell. This chain is Cell division topological specificity factor, found in Pectobacterium carotovorum subsp. carotovorum (strain PC1).